The chain runs to 793 residues: Flavin carrier protein 1 (793 aa).

The signal sequence occupies residues 1–21 (MQVLVTLWCLICTCLVLPVAA). The Lumenal segment spans residues 22-163 (KKRTLTASSL…FFSNGKTVSQ (142 aa)). The N-linked (GlcNAc...) asparagine glycan is linked to Asn-143. The helical transmembrane segment at 164–184 (IGVKWVTAVIAGIGLLTSAVL) threads the bilayer. The Cytoplasmic segment spans residues 185–194 (STFGNSTAAS). A helical membrane pass occupies residues 195–215 (HISANTMSLFLYFQSVAVVAM). Over 216 to 223 (QHVDSVPP) the chain is Lumenal. The chain crosses the membrane as a helical span at residues 224–244 (IAAAWSENLAWSMGLIRITFM). Residues 245-249 (QKIFR) lie on the Cytoplasmic side of the membrane. The helical transmembrane segment at 250-272 (WYVEATGGSASLYLTATTMSVLT) threads the bilayer. At 273–317 (QRGLDYLKNTSVYKRAENVLYGNSNTLIFRGIKRMGYRMKIENTA) the chain is on the lumenal side. N-linked (GlcNAc...) asparagine glycosylation occurs at Asn-281. The chain crosses the membrane as a helical span at residues 318–338 (IVCTGFTFFVLCGYFLAGFIM). Residues 339–372 (ACKYSIELCIRCGWMRSDRFYQFRKNWRSVLKGS) lie on the Cytoplasmic side of the membrane. A helical membrane pass occupies residues 373 to 393 (LLRYIYIGFTQLTILSFWEFT). Over 394-397 (ERDS) the chain is Lumenal. A helical transmembrane segment spans residues 398–418 (AGVIVIACLFIVLSCGLMAWA). The Cytoplasmic portion of the chain corresponds to 419–461 (AYRTIFFASKSVEMYNNPAALLYGDEYVLNKYGFFYTMFNAKH). The chain crosses the membrane as a helical span at residues 462–482 (YWWNALLTTYILVKALFVGFA). The Lumenal portion of the chain corresponds to 483–484 (QA). A helical membrane pass occupies residues 485-505 (SGKTQALAIFIIDLAYFVAII). The Cytoplasmic segment spans residues 506–516 (RYKPYLDRPTN). A helical membrane pass occupies residues 517-537 (IVNIFICTVTLVNSFLFMFFS). The Lumenal portion of the chain corresponds to 538 to 551 (NLFNQKYAVSAIMG). The helical transmembrane segment at 552–572 (WVFFIMNAAFSLLLLLMILAF) threads the bilayer. The Cytoplasmic portion of the chain corresponds to 573–793 (TTIILFSKNP…KANILDPDYL (221 aa)). Ser-610 is modified (phosphoserine). Position 626 is a phosphothreonine (Thr-626). 2 disordered regions span residues 649–674 (YDDEKTGTNSENAESSSKETTRPTFS) and 689–731 (KLGS…QESE). Polar residues predominate over residues 701–719 (ITQQEVSPDRASSSPNSKS). 2 positions are modified to phosphoserine: Ser-771 and Ser-774.

It belongs to the transient receptor potential (TRP) ion channel family.

The protein localises to the endoplasmic reticulum membrane. In terms of biological role, may be responsible for the transport of FAD into the endoplasmic reticulum lumen, where it is required for oxidative protein folding. The sequence is that of Flavin carrier protein 1 (FLC1) from Saccharomyces cerevisiae (strain ATCC 204508 / S288c) (Baker's yeast).